The primary structure comprises 255 residues: Aliphatic sulfonates import ATP-binding protein SsuB (255 aa).

The 222-residue stretch at 12–233 (LLLNAVSKHY…RLGSVRLAEL (222 aa)) folds into the ABC transporter domain. Residue 44–51 (GRSGGGKS) coordinates ATP.

Belongs to the ABC transporter superfamily. Aliphatic sulfonates importer (TC 3.A.1.17.2) family. In terms of assembly, the complex is composed of two ATP-binding proteins (SsuB), two transmembrane proteins (SsuC) and a solute-binding protein (SsuA).

It is found in the cell inner membrane. The catalysed reaction is ATP + H2O + aliphatic sulfonate-[sulfonate-binding protein]Side 1 = ADP + phosphate + aliphatic sulfonateSide 2 + [sulfonate-binding protein]Side 1.. Part of the ABC transporter complex SsuABC involved in aliphatic sulfonates import. Responsible for energy coupling to the transport system. The polypeptide is Aliphatic sulfonates import ATP-binding protein SsuB (Escherichia coli O1:K1 / APEC).